Consider the following 234-residue polypeptide: Purine nucleoside phosphorylase DeoD-type (234 aa).

Residue H5 coordinates a purine D-ribonucleoside. Phosphate contacts are provided by residues G21, R25, R44, and 88–91 (RVGT). Residues 178-180 (EME) and 202-203 (SD) contribute to the a purine D-ribonucleoside site. The Proton donor role is filled by D203.

It belongs to the PNP/UDP phosphorylase family. In terms of assembly, homohexamer; trimer of homodimers.

It carries out the reaction a purine D-ribonucleoside + phosphate = a purine nucleobase + alpha-D-ribose 1-phosphate. It catalyses the reaction a purine 2'-deoxy-D-ribonucleoside + phosphate = a purine nucleobase + 2-deoxy-alpha-D-ribose 1-phosphate. Its function is as follows. Catalyzes the reversible phosphorolytic breakdown of the N-glycosidic bond in the beta-(deoxy)ribonucleoside molecules, with the formation of the corresponding free purine bases and pentose-1-phosphate. The protein is Purine nucleoside phosphorylase DeoD-type of Lactococcus lactis subsp. cremoris (strain MG1363).